Consider the following 306-residue polypeptide: Ribonuclease Z (306 aa).

Residues His-63, His-65, Asp-67, His-68, His-141, Asp-208, and His-266 each contribute to the Zn(2+) site. Asp-67 functions as the Proton acceptor in the catalytic mechanism.

It belongs to the RNase Z family. Homodimer. Zn(2+) is required as a cofactor.

It catalyses the reaction Endonucleolytic cleavage of RNA, removing extra 3' nucleotides from tRNA precursor, generating 3' termini of tRNAs. A 3'-hydroxy group is left at the tRNA terminus and a 5'-phosphoryl group is left at the trailer molecule.. Zinc phosphodiesterase, which displays some tRNA 3'-processing endonuclease activity. Probably involved in tRNA maturation, by removing a 3'-trailer from precursor tRNA. The chain is Ribonuclease Z from Protochlamydia amoebophila (strain UWE25).